We begin with the raw amino-acid sequence, 217 residues long: Probable nicotinate-nucleotide adenylyltransferase (217 aa).

It belongs to the NadD family.

The enzyme catalyses nicotinate beta-D-ribonucleotide + ATP + H(+) = deamido-NAD(+) + diphosphate. The protein operates within cofactor biosynthesis; NAD(+) biosynthesis; deamido-NAD(+) from nicotinate D-ribonucleotide: step 1/1. Functionally, catalyzes the reversible adenylation of nicotinate mononucleotide (NaMN) to nicotinic acid adenine dinucleotide (NaAD). In Moorella thermoacetica (strain ATCC 39073 / JCM 9320), this protein is Probable nicotinate-nucleotide adenylyltransferase.